A 217-amino-acid polypeptide reads, in one-letter code: Biotin transport regulator (217 aa).

A disordered region spans residues 14–49 (GDGLGNLAGRSADPTGAADKGESGVPVPPTGFVDPT).

May be part of a system that R.meliloti uses to respond to plant (alfalfa) biotin signals. This chain is Biotin transport regulator (bioS), found in Rhizobium meliloti (strain 1021) (Ensifer meliloti).